Reading from the N-terminus, the 60-residue chain is Antimicrobial peptide Eval151 (60 aa).

An N-terminal signal peptide occupies residues 1–23 (MKVLPVLFLTLLVLISIPAETFC). R36 is modified (arginine amide). Basic and acidic residues predominate over residues 36–54 (RGKRNDFFRSDVSRDDESH). Residues 36–60 (RGKRNDFFRSDVSRDDESHPSPGQK) are disordered. Positions 37–60 (GKRNDFFRSDVSRDDESHPSPGQK) are excised as a propeptide.

This sequence belongs to the non-disulfide-bridged peptide (NDBP) superfamily. In terms of tissue distribution, expressed by the venom gland.

The protein resides in the secreted. Functionally, probable antimicrobial peptide. Has no inhibitory activity against herpes simplex virus type 1 (HSV-1). This chain is Antimicrobial peptide Eval151, found in Euscorpiops validus (Scorpion).